Consider the following 269-residue polypeptide: Shikimate dehydrogenase (NADP(+)) (269 aa).

Residues serine 17 to serine 19 and threonine 64 each bind shikimate. Lysine 68 (proton acceptor) is an active-site residue. Position 80 (glutamate 80) interacts with NADP(+). Shikimate contacts are provided by asparagine 89 and aspartate 105. NADP(+)-binding positions include glycine 130 to alanine 134, asparagine 154 to lysine 159, and methionine 213. Tyrosine 215 contributes to the shikimate binding site. Glycine 237 lines the NADP(+) pocket.

Belongs to the shikimate dehydrogenase family. As to quaternary structure, homodimer.

It catalyses the reaction shikimate + NADP(+) = 3-dehydroshikimate + NADPH + H(+). Its pathway is metabolic intermediate biosynthesis; chorismate biosynthesis; chorismate from D-erythrose 4-phosphate and phosphoenolpyruvate: step 4/7. Functionally, involved in the biosynthesis of the chorismate, which leads to the biosynthesis of aromatic amino acids. Catalyzes the reversible NADPH linked reduction of 3-dehydroshikimate (DHSA) to yield shikimate (SA). The sequence is that of Shikimate dehydrogenase (NADP(+)) from Neisseria meningitidis serogroup C / serotype 2a (strain ATCC 700532 / DSM 15464 / FAM18).